Reading from the N-terminus, the 146-residue chain is Hut operon positive regulatory protein (146 aa).

It belongs to the HutP family. In terms of assembly, homohexamer.

Antiterminator that binds to cis-acting regulatory sequences on the mRNA in the presence of histidine, thereby suppressing transcription termination and activating the hut operon for histidine utilization. The sequence is that of Hut operon positive regulatory protein from Bacillus cytotoxicus (strain DSM 22905 / CIP 110041 / 391-98 / NVH 391-98).